Here is a 292-residue protein sequence, read N- to C-terminus: Formamidopyrimidine-DNA glycosylase (292 aa).

Pro-2 acts as the Schiff-base intermediate with DNA in catalysis. The active-site Proton donor is Glu-3. Catalysis depends on Lys-58, which acts as the Proton donor; for beta-elimination activity. 3 residues coordinate DNA: His-103, Arg-122, and Lys-165. The FPG-type zinc finger occupies Arg-256 to Lys-292. Arg-282 serves as the catalytic Proton donor; for delta-elimination activity.

The protein belongs to the FPG family. Monomer. The cofactor is Zn(2+).

The enzyme catalyses Hydrolysis of DNA containing ring-opened 7-methylguanine residues, releasing 2,6-diamino-4-hydroxy-5-(N-methyl)formamidopyrimidine.. It catalyses the reaction 2'-deoxyribonucleotide-(2'-deoxyribose 5'-phosphate)-2'-deoxyribonucleotide-DNA = a 3'-end 2'-deoxyribonucleotide-(2,3-dehydro-2,3-deoxyribose 5'-phosphate)-DNA + a 5'-end 5'-phospho-2'-deoxyribonucleoside-DNA + H(+). Functionally, involved in base excision repair of DNA damaged by oxidation or by mutagenic agents. Acts as a DNA glycosylase that recognizes and removes damaged bases. Has a preference for oxidized purines, such as 7,8-dihydro-8-oxoguanine (8-oxoG). Has AP (apurinic/apyrimidinic) lyase activity and introduces nicks in the DNA strand. Cleaves the DNA backbone by beta-delta elimination to generate a single-strand break at the site of the removed base with both 3'- and 5'-phosphates. The polypeptide is Formamidopyrimidine-DNA glycosylase (Methylocella silvestris (strain DSM 15510 / CIP 108128 / LMG 27833 / NCIMB 13906 / BL2)).